The following is a 286-amino-acid chain: Leukocyte cell-derived chemotaxin 1 (286 aa).

A helical transmembrane segment spans residues 29-49; the sequence is LVAFIAGAALLLFGGVGAFYL. The BRICHOS domain maps to 75–157; that stretch reads DSAEGTIVEV…FCADLPIYWH (83 aa). An intrachain disulfide couples cysteine 102 to cysteine 149. The propeptide occupies 166 to 169; sequence RKRR. Residues 166 to 176 show a composition bias toward basic residues; sequence RKRRSATRMRR. The segment at 166–220 is disordered; it reads RKRRSATRMRRQTSAGVNRQPARRRNSTASARDERPTGPEYNPENPYHQNQGSEG. The N-linked (GlcNAc...) asparagine glycan is linked to asparagine 191. Cystine bridges form between cysteine 234–cysteine 238, cysteine 235–cysteine 275, cysteine 245–cysteine 269, and cysteine 249–cysteine 265.

Belongs to the chondromodulin-1 family. After cleavage, the post-translationally modified ChM-I is secreted as a glycoprotein.

Its subcellular location is the secreted. It localises to the extracellular space. The protein resides in the extracellular matrix. The protein localises to the endomembrane system. Its function is as follows. Bifunctional growth regulator. May contribute to the rapid growth of cartilage and vascular invasion prior to the replacement of cartilage by bone during endochondral bone development. Plays a role as antiangiogenic factor in cardiac valves to suppress neovascularization. This is Leukocyte cell-derived chemotaxin 1 from Danio rerio (Zebrafish).